A 206-amino-acid chain; its full sequence is Putative metal transport protein HI_1621 (206 aa).

A run of 6 helical transmembrane segments spans residues 6–26, 38–58, 72–92, 94–114, 136–156, and 165–185; these read GVLH…GIAV, LTAL…PVGI, FLGW…VIFF, FGGF…AVIA, IGAG…VLML, and LVWL…IISV.

This sequence belongs to the CbiM family.

The protein localises to the cell membrane. In terms of biological role, may be involved in metal transport. This is Putative metal transport protein HI_1621 from Haemophilus influenzae (strain ATCC 51907 / DSM 11121 / KW20 / Rd).